Consider the following 445-residue polypeptide: Ribosomal protein uS12 methylthiotransferase RimO (445 aa).

Residues 10–120 (PKVGFVSLGC…VVNAVHEVVP (111 aa)) enclose the MTTase N-terminal domain. Positions 19, 55, 84, 153, 157, and 160 each coordinate [4Fe-4S] cluster. Positions 139 to 378 (LTPRHYAYLK…AHQQAISSAR (240 aa)) constitute a Radical SAM core domain. In terms of domain architecture, TRAM spans 380–445 (QLRIGREIEV…DEYDLWAEQI (66 aa)).

The protein belongs to the methylthiotransferase family. RimO subfamily. Requires [4Fe-4S] cluster as cofactor.

The protein resides in the cytoplasm. It carries out the reaction L-aspartate(89)-[ribosomal protein uS12]-hydrogen + (sulfur carrier)-SH + AH2 + 2 S-adenosyl-L-methionine = 3-methylsulfanyl-L-aspartate(89)-[ribosomal protein uS12]-hydrogen + (sulfur carrier)-H + 5'-deoxyadenosine + L-methionine + A + S-adenosyl-L-homocysteine + 2 H(+). In terms of biological role, catalyzes the methylthiolation of an aspartic acid residue of ribosomal protein uS12. This is Ribosomal protein uS12 methylthiotransferase RimO from Pseudomonas fluorescens (strain Pf0-1).